Here is a 269-residue protein sequence, read N- to C-terminus: 2-keto-4-pentenoate hydratase (269 aa).

Belongs to the hydratase/decarboxylase family. MhpD subfamily. A divalent metal cation serves as cofactor.

The enzyme catalyses (S)-4-hydroxy-2-oxopentanoate = (2Z)-2-hydroxypenta-2,4-dienoate + H2O. It functions in the pathway aromatic compound metabolism; 3-phenylpropanoate degradation. Catalyzes the conversion of 2-hydroxypentadienoic acid (enolic form of 2-oxopent-4-enoate) to 4-hydroxy-2-ketopentanoic acid. The polypeptide is 2-keto-4-pentenoate hydratase (Paraburkholderia xenovorans (strain LB400)).